The sequence spans 211 residues: Pyridoxine/pyridoxamine 5'-phosphate oxidase (211 aa).

Substrate-binding positions include 7 to 10 (RREY) and Lys-65. Residues 60 to 65 (RIVLLK), 75 to 76 (YT), Arg-81, Lys-82, and Gln-104 each bind FMN. Substrate-binding residues include Tyr-122, Arg-126, and Ser-130. FMN-binding positions include 139–140 (QS) and Trp-184. A substrate-binding site is contributed by 190 to 192 (RLH). Residue Arg-194 coordinates FMN.

Belongs to the pyridoxamine 5'-phosphate oxidase family. Homodimer. It depends on FMN as a cofactor.

The catalysed reaction is pyridoxamine 5'-phosphate + O2 + H2O = pyridoxal 5'-phosphate + H2O2 + NH4(+). It catalyses the reaction pyridoxine 5'-phosphate + O2 = pyridoxal 5'-phosphate + H2O2. It participates in cofactor metabolism; pyridoxal 5'-phosphate salvage; pyridoxal 5'-phosphate from pyridoxamine 5'-phosphate: step 1/1. It functions in the pathway cofactor metabolism; pyridoxal 5'-phosphate salvage; pyridoxal 5'-phosphate from pyridoxine 5'-phosphate: step 1/1. Functionally, catalyzes the oxidation of either pyridoxine 5'-phosphate (PNP) or pyridoxamine 5'-phosphate (PMP) into pyridoxal 5'-phosphate (PLP). The chain is Pyridoxine/pyridoxamine 5'-phosphate oxidase from Vibrio cholerae serotype O1 (strain ATCC 39541 / Classical Ogawa 395 / O395).